Reading from the N-terminus, the 459-residue chain is NADH oxidase (459 aa).

Asparagine 10 contributes to the FAD binding site. The active-site Proton acceptor is histidine 11. FAD is bound by residues alanine 12, aspartate 34, glutamine 35, cysteine 44, valine 81, alanine 110, serine 113, lysine 143, and tyrosine 172. Cysteine 44 acts as the Redox-active in catalysis. Cysteine 44 carries the cysteine sulfinic acid (-SO2H) modification. NAD(+) contacts are provided by isoleucine 173, aspartate 192, tyrosine 201, and glycine 256. Aspartate 294 contacts FAD. Alanine 310 contributes to the NAD(+) binding site. The FAD site is built by leucine 311, alanine 312, and serine 313. An NAD(+)-binding site is contributed by glycine 341. FAD is bound at residue phenylalanine 439.

This sequence belongs to the class-III pyridine nucleotide-disulfide oxidoreductase family. Requires FAD as cofactor.

It is found in the secreted. The protein resides in the cell wall. The enzyme catalyses 2 NADH + O2 + 2 H(+) = 2 NAD(+) + 2 H2O. Catalyzes the four-electron reduction of molecular oxygen to water. Plays a role in redox balance maintenance. May be involved in mediating bacterial adhesion to host cells. May be considered a potential virulence factor. The polypeptide is NADH oxidase (Streptococcus pneumoniae serotype 4 (strain ATCC BAA-334 / TIGR4)).